Reading from the N-terminus, the 249-residue chain is Isoprenyl transferase 1 (249 aa).

D30 is a catalytic residue. Mg(2+) is bound at residue D30. Substrate is bound by residues 31–34, W35, R43, H47, and 75–77; these read GNGR and STE. The active-site Proton acceptor is N78. Substrate contacts are provided by residues W79, R81, R198, and 204–206; that span reads RMS. Mg(2+) is bound at residue E217.

The protein belongs to the UPP synthase family. Homodimer. Mg(2+) serves as cofactor.

Functionally, catalyzes the condensation of isopentenyl diphosphate (IPP) with allylic pyrophosphates generating different type of terpenoids. This is Isoprenyl transferase 1 from Tropheryma whipplei (strain Twist) (Whipple's bacillus).